The primary structure comprises 1388 residues: DNA-directed RNA polymerase subunit beta (1388 aa).

This sequence belongs to the RNA polymerase beta chain family. As to quaternary structure, the RNAP catalytic core consists of 2 alpha, 1 beta, 1 beta' and 1 omega subunit. When a sigma factor is associated with the core the holoenzyme is formed, which can initiate transcription.

The catalysed reaction is RNA(n) + a ribonucleoside 5'-triphosphate = RNA(n+1) + diphosphate. Functionally, DNA-dependent RNA polymerase catalyzes the transcription of DNA into RNA using the four ribonucleoside triphosphates as substrates. This chain is DNA-directed RNA polymerase subunit beta, found in Xylella fastidiosa (strain Temecula1 / ATCC 700964).